The chain runs to 859 residues: Cadherin-related family member 1 (859 aa).

The signal sequence occupies residues 1–21 (MRRGPRVALVLGLLRIYLAQA). Residues 22-701 (NFAPHFFDNG…LIQTKDNPMK (680 aa)) lie on the Extracellular side of the membrane. 6 Cadherin domains span residues 36 to 135 (NGNM…APRF), 136 to 247 (IQEP…APIF), 248 to 354 (VGTP…PPTF), 360 to 473 (PQNK…VPKF), 474 to 577 (TSHY…YPQF), and 569 to 691 (DVND…MAAF). Asn-58 and Asn-89 each carry an N-linked (GlcNAc...) asparagine glycan. A glycan (N-linked (GlcNAc...) asparagine) is linked at Asn-288. A helical membrane pass occupies residues 702–722 (AVGVLAGVMAIVVAITVLIST). At 723-859 (ATFWRNKKSN…KKSLDNKAYI (137 aa)) the chain is on the cytoplasmic side. The tract at residues 793-838 (PALPPPPKMASSMVAQQTVPTVSGSLTPQPSPQLPTPKTLGGPVQS) is disordered. Residues 805-816 (MVAQQTVPTVSG) show a composition bias toward polar residues.

Interacts with PROM1. In terms of processing, undergoes proteolytic cleavage; produces a soluble 95 kDa N-terminal fragment and a 25 kDa cell-associated C-terminal fragment. In terms of tissue distribution, expressed in cone and rod photoreceptor cells (at protein level). Expressed in photoreceptor cells of the outer nuclear layer of the retina. Expressed in mitral and tufted cells in the olfactory bulb.

Its subcellular location is the cell membrane. Potential calcium-dependent cell-adhesion protein. May be required for the structural integrity of the outer segment (OS) of photoreceptor cells. The protein is Cadherin-related family member 1 (Cdhr1) of Mus musculus (Mouse).